The primary structure comprises 356 residues: NAC domain-containing protein JA2L (356 aa).

An NAC domain is found at 14 to 162 (LPPGFRFYPT…DWVLCRIYKK (149 aa)). Residues 111 to 168 (VGIKKALVFYIGKAPKGTKTNWIMHEYRLSEPTTKTGSSRLDDWVLCRIYKKNSGGQK) mediate DNA binding. Positions 163-191 (NSGGQKSSCSDLQNKDISHASSSSSSSQF) are disordered. The span at 164 to 174 (SGGQKSSCSDL) shows a compositional bias: polar residues.

As to expression, expressed in guard cells of the epidermis.

It is found in the nucleus. Functionally, transcription factor that acts downstream of MYC2 in the jasmonate-mediated response to Botrytis cinerea infection. With MYC2 forms a transcription module that regulates wounding-responsive genes. Involved in jasmonate- and coronatine-mediated stomatal reopening in response to Pseudomonas syringae pv tomato DC3000 infection. Regulates the expression of threonine deaminase 2 (TD2) through promoter binding. In Solanum lycopersicum (Tomato), this protein is NAC domain-containing protein JA2L.